The chain runs to 427 residues: U1 small nuclear ribonucleoprotein 70 kDa (427 aa).

Disordered stretches follow at residues 82 to 102 (EPGD…SQKR) and 215 to 427 (RGRT…EYVR). The span at 93-102 (PEVELPSQKR) shows a compositional bias: basic and acidic residues. Residues 138–216 (KTLFVSRLNY…RRVLVDVERG (79 aa)) form the RRM domain. Over residues 227–241 (LGGGLGTSRVGGGEE) the composition is skewed to gly residues. Composition is skewed to basic and acidic residues over residues 257–402 (EPSR…RYDK) and 409–427 (RYER…EYVR). A Phosphoserine modification is found at Ser282.

As to quaternary structure, component of the spliceosome. Interacts with CYP63, U2AF35A, U2AF35B, SRZ21, RSZ22, SR34, SR45, SR45A and SCL33. Post-translationally, phosphorylated. The association and dissociation with SR45 is not affected by the phosphorylation status. Ubiquitous.

The protein localises to the nucleus speckle. Its subcellular location is the nucleus. It localises to the nucleoplasm. Its function is as follows. Mediates the splicing of pre-mRNA by binding to the loop I region of U1-snRNA. This is U1 small nuclear ribonucleoprotein 70 kDa (RNU1) from Arabidopsis thaliana (Mouse-ear cress).